The primary structure comprises 522 residues: Perilipin-1 (522 aa).

Ser81 carries the post-translational modification Phosphoserine. Thr85 is subject to Phosphothreonine. Phosphoserine is present on residues Ser126, Ser130, Ser132, Ser137, and Ser174. 2 disordered regions span residues 195–217 and 287–318; these read DKEE…AKPS and LAAA…EENK. Acidic residues predominate over residues 291-314; it reads QEEDHEDQTDTEGEDTEEEEELET. A required for interaction with CIDEC region spans residues 291-319; it reads QEEDHEDQTDTEGEDTEEEEELETEENKF. Residues Thr299 and Thr301 each carry the phosphothreonine modification. 3 positions are modified to phosphoserine: Ser382, Ser384, and Ser408. Residues 413–522 are disordered; the sequence is ESEFRDIDNP…THYSQLRKKS (110 aa). A compositionally biased stretch (basic and acidic residues) spans 414–435; sequence SEFRDIDNPPAEVERREAERRA. A phosphoserine mark is found at Ser436, Ser497, and Ser499.

This sequence belongs to the perilipin family. In terms of assembly, interacts with ABHD5. Interacts with CIDEC. Interacts with AQP7. Major cAMP-dependent protein kinase-substrate in adipocytes, also dephosphorylated by PP1. When phosphorylated, may be maximally sensitive to HSL and when unphosphorylated, may play a role in the inhibition of lipolysis, by acting as a barrier in lipid droplet. In terms of tissue distribution, detected in adipocytes from white adipose tissue (at protein level). Detected in visceral adipose tissue and mammary gland.

It localises to the endoplasmic reticulum. The protein resides in the lipid droplet. Modulator of adipocyte lipid metabolism. Coats lipid storage droplets to protect them from breakdown by hormone-sensitive lipase (HSL). Its absence may result in leanness. Plays a role in unilocular lipid droplet formation by activating CIDEC. Their interaction promotes lipid droplet enlargement and directional net neutral lipid transfer. May modulate lipolysis and triglyceride levels. The sequence is that of Perilipin-1 (PLIN1) from Homo sapiens (Human).